A 475-amino-acid chain; its full sequence is tRNA-2-methylthio-N(6)-dimethylallyladenosine synthase (475 aa).

An MTTase N-terminal domain is found at 3 to 120 (KKLHIKTWGC…LPEMIDQIRA (118 aa)). 6 residues coordinate [4Fe-4S] cluster: Cys12, Cys49, Cys83, Cys157, Cys161, and Cys164. In terms of domain architecture, Radical SAM core spans 143 to 375 (RADGPSAFVS…QDRITQQAMR (233 aa)). Positions 378 to 441 (RQMVGTVQRI…TNSLRGVFIR (64 aa)) constitute a TRAM domain.

It belongs to the methylthiotransferase family. MiaB subfamily. As to quaternary structure, monomer. It depends on [4Fe-4S] cluster as a cofactor.

Its subcellular location is the cytoplasm. The catalysed reaction is N(6)-dimethylallyladenosine(37) in tRNA + (sulfur carrier)-SH + AH2 + 2 S-adenosyl-L-methionine = 2-methylsulfanyl-N(6)-dimethylallyladenosine(37) in tRNA + (sulfur carrier)-H + 5'-deoxyadenosine + L-methionine + A + S-adenosyl-L-homocysteine + 2 H(+). Functionally, catalyzes the methylthiolation of N6-(dimethylallyl)adenosine (i(6)A), leading to the formation of 2-methylthio-N6-(dimethylallyl)adenosine (ms(2)i(6)A) at position 37 in tRNAs that read codons beginning with uridine. The chain is tRNA-2-methylthio-N(6)-dimethylallyladenosine synthase from Shewanella halifaxensis (strain HAW-EB4).